The following is a 213-amino-acid chain: GTP cyclohydrolase 1 (213 aa).

Cysteine 104, histidine 107, and cysteine 175 together coordinate Zn(2+).

It belongs to the GTP cyclohydrolase I family. In terms of assembly, homomer.

It catalyses the reaction GTP + H2O = 7,8-dihydroneopterin 3'-triphosphate + formate + H(+). It participates in cofactor biosynthesis; 7,8-dihydroneopterin triphosphate biosynthesis; 7,8-dihydroneopterin triphosphate from GTP: step 1/1. The chain is GTP cyclohydrolase 1 from Brucella canis (strain ATCC 23365 / NCTC 10854 / RM-666).